A 1565-amino-acid chain; its full sequence is Structure-specific endonuclease subunit SLX4 (1565 aa).

The disordered stretch occupies residues 1-87; that stretch reads MVPESAPNGN…ENEYKLDATD (87 aa). Positions 7-24 are enriched in polar residues; that stretch reads PNGNSQPLPSCFTTTGVP. The span at 43–58 shows a compositional bias: basic and acidic residues; the sequence is KRADPERLRHASEESP. A Phosphoserine modification is found at Ser-111. Lys-115 participates in a covalent cross-link: Glycyl lysine isopeptide (Lys-Gly) (interchain with G-Cter in SUMO2). 2 UBZ4-type zinc fingers span residues 117–147 and 157–185; these read LFFC…DEAE and IPDC…VRME. Positions 120, 123, 138, 142, 160, and 163 each coordinate Zn(2+). A Glycyl lysine isopeptide (Lys-Gly) (interchain with G-Cter in SUMO2) cross-link involves residue Lys-171. Positions 176 and 180 each coordinate Zn(2+). Disordered regions lie at residues 203–242, 279–305, and 387–418; these read EVDG…PEAP, GAEK…ETTG, and EPQL…SHSP. The span at 220–236 shows a compositional bias: basic residues; it reads LKRKGVTTKREPRRRKV. Lys-283 participates in a covalent cross-link: Glycyl lysine isopeptide (Lys-Gly) (interchain with G-Cter in SUMO2). The span at 296–305 shows a compositional bias: polar residues; that stretch reads LVTQDSETTG. Residues 499–1565 are interaction with PLK1 and TERF2-TERF2IP; the sequence is MVNNPHLSDV…PSGRKKKDQK (1067 aa). A BTB domain is found at 506–579; the sequence is SDVQFQLDSG…LYMADTDMPP (74 aa). Lys-649 is covalently cross-linked (Glycyl lysine isopeptide (Lys-Gly) (interchain with G-Cter in SUMO2)). Disordered regions lie at residues 683 to 769, 789 to 848, 861 to 943, 963 to 989, 1063 to 1099, 1128 to 1212, and 1249 to 1337; these read RAAD…DPSF, GCKQ…SPSQ, PSVS…SPRA, DEEL…EFSP, PGVS…PNLE, GRQA…MGDY, and SDDC…ITPM. Residues 715 to 730 are compositionally biased toward basic and acidic residues; sequence ENTEHMESSGLEKEEA. The segment covering 798 to 808 has biased composition (polar residues); the sequence is PRVSSELSQIT. Residues 809–822 are compositionally biased toward basic and acidic residues; that stretch reads VDHEEQSDHVRETQ. Low complexity-rich tracts occupy residues 833–848 and 861–875; these read SCSL…SPSQ and PSVS…RVAS. Ser-845 and Ser-875 each carry phosphoserine. Polar residues predominate over residues 877–894; it reads RSLSPTTPTKQRRGSNIV. Glycyl lysine isopeptide (Lys-Gly) (interchain with G-Cter in SUMO2) cross-links involve residues Lys-886, Lys-898, and Lys-925. Residues Ser-926 and Ser-940 each carry the phosphoserine modification. Residues 967 to 985 show a composition bias toward basic and acidic residues; sequence EHTKTESVSKDSPEGRKVP. Lys-983 participates in a covalent cross-link: Glycyl lysine isopeptide (Lys-Gly) (interchain with G-Cter in SUMO2). Position 988 is a phosphoserine (Ser-988). The interval 1120–1413 is interaction with MUS81; the sequence is ITLGAFDSGR…TTETCNPSRL (294 aa). The span at 1179-1189 shows a compositional bias: acidic residues; the sequence is DVVEVGDSDDE. Residues Ser-1249 and Ser-1254 each carry the phosphoserine modification. The segment covering 1285–1295 has biased composition (acidic residues); it reads LWDDWNEEEGQ. Residues Lys-1349 and Lys-1350 each participate in a glycyl lysine isopeptide (Lys-Gly) (interchain with G-Cter in SUMO2) cross-link. 2 disordered regions span residues 1381–1449 and 1546–1565; these read ESDS…SSKS and KEKL…KDQK. Ser-1384 is modified (phosphoserine). A compositionally biased stretch (polar residues) spans 1401-1412; sequence QASTTETCNPSR. The segment at 1406 to 1565 is interaction with SLX1; that stretch reads ETCNPSRLPT…PSGRKKKDQK (160 aa). The span at 1437 to 1449 shows a compositional bias: low complexity; the sequence is SVDGSDNSFSSKS. Residues 1547-1565 are compositionally biased toward basic residues; sequence EKLKHKRRQPSGRKKKDQK.

This sequence belongs to the SLX4 family. In terms of assembly, forms a heterodimer with SLX1A/GIYD1. Interacts with ERCC4/XPF; catalytic subunit of the ERCC4-ERCC1 endonuclease. Interacts with MUS81; catalytic subunit of the MUS81-EME1 endonuclease. Interacts with MSH2; component of the MSH2-MSH3 mismatch repair complex. Interacts with TERF2-TERF2IP. Interacts with PLK1 and SLX4IP. In terms of tissue distribution, highly expressed in testis. Expressed in bone marrow, brain, thymus and weakly in heart, kidney and spleen.

The protein localises to the nucleus. In terms of biological role, regulatory subunit that interacts with and increases the activity of different structure-specific endonucleases. Has several distinct roles in protecting genome stability by resolving diverse forms of deleterious DNA structures originating from replication and recombination intermediates and from DNA damage. Component of the SLX1-SLX4 structure-specific endonuclease that resolves DNA secondary structures generated during DNA repair and recombination. Has endonuclease activity towards branched DNA substrates, introducing single-strand cuts in duplex DNA close to junctions with ss-DNA. Has a preference for 5'-flap structures, and promotes symmetrical cleavage of static and migrating Holliday junctions (HJs). Resolves HJs by generating two pairs of ligatable, nicked duplex products. Interacts with the structure-specific ERCC4-ERCC1 endonuclease and promotes the cleavage of bubble structures. Interacts with the structure-specific MUS81-EME1 endonuclease and promotes the cleavage of 3'-flap and replication fork-like structures. SLX4 is required for recovery from alkylation-induced DNA damage and is involved in the resolution of DNA double-strand breaks. This is Structure-specific endonuclease subunit SLX4 (Slx4) from Mus musculus (Mouse).